The sequence spans 299 residues: Pyridoxal 5'-phosphate synthase subunit PdxS (299 aa).

Residue aspartate 24 participates in D-ribose 5-phosphate binding. The active-site Schiff-base intermediate with D-ribose 5-phosphate is lysine 81. Glycine 153 contributes to the D-ribose 5-phosphate binding site. A D-glyceraldehyde 3-phosphate-binding site is contributed by arginine 165. D-ribose 5-phosphate is bound by residues glycine 219 and 240-241 (GS).

Belongs to the PdxS/SNZ family. As to quaternary structure, in the presence of PdxT, forms a dodecamer of heterodimers.

The enzyme catalyses aldehydo-D-ribose 5-phosphate + D-glyceraldehyde 3-phosphate + L-glutamine = pyridoxal 5'-phosphate + L-glutamate + phosphate + 3 H2O + H(+). Its pathway is cofactor biosynthesis; pyridoxal 5'-phosphate biosynthesis. Functionally, catalyzes the formation of pyridoxal 5'-phosphate from ribose 5-phosphate (RBP), glyceraldehyde 3-phosphate (G3P) and ammonia. The ammonia is provided by the PdxT subunit. Can also use ribulose 5-phosphate and dihydroxyacetone phosphate as substrates, resulting from enzyme-catalyzed isomerization of RBP and G3P, respectively. In Methanococcus maripaludis (strain C5 / ATCC BAA-1333), this protein is Pyridoxal 5'-phosphate synthase subunit PdxS.